Here is a 290-residue protein sequence, read N- to C-terminus: Fat storage-inducing transmembrane protein 1 (290 aa).

Topologically, residues 1–18 (MERGPVVGAGLGARARIR) are lumenal. The helical transmembrane segment at 19-39 (TLLGCLVKVLLWVASALLYFG) threads the bilayer. Residues 40–54 (SEQAARLLGSPCLRR) are Cytoplasmic-facing. Residues 55 to 75 (LYHAWLAAVVIFGPLLQFHVN) form a helical membrane-spanning segment. The Lumenal portion of the chain corresponds to 76–94 (PRTIFASHGNFFNIKFVNS). The helical transmembrane segment at 95–115 (AWGWTCTFLGGFVLLVVFLAT) threads the bilayer. Residues 116–141 (RRVAVTARHLSRLVVGAAVWRGAGRA) are Cytoplasmic-facing. A helical membrane pass occupies residues 142–162 (FLLIEDLTGSCFEPLPQGLLL). The Lumenal segment spans residues 163–187 (HELPDRRSRLAAGHQWRGYTVSSHT). The active site involves histidine 186. A helical membrane pass occupies residues 188-208 (FLLTFCCLLMAEEAAVFAKYL). Over 209–220 (AHGLPAGAPLRL) the chain is Cytoplasmic. Residues 221 to 241 (VFLLNVLLLGLWNFLLLCTVI) traverse the membrane as a helical segment. The Lumenal segment spans residues 242–249 (YFHQYTHK). Histidine 244 is an active-site residue. Residues 250 to 270 (VVGAAVGTFAWYLTYGSWYHQ) traverse the membrane as a helical segment. The Cytoplasmic portion of the chain corresponds to 271 to 290 (PWSPGSPGHGLFTHPSRKHN).

It belongs to the FIT family. FIT1 subfamily.

It localises to the endoplasmic reticulum membrane. Plays an important role in the formation of lipid droplets (LDs) which are storage organelles at the center of lipid and energy homeostasis. Directly binds to diacylglycerol (DAGs) and triacylglycerol. The protein is Fat storage-inducing transmembrane protein 1 of Sus scrofa (Pig).